The primary structure comprises 208 residues: MTIQTFKSTDFDVFTVDGLEERMSAIKTNIHPKLEALGEQFAEYLSKHTDENFFYHVAKHARRKVNPPNDTWVAFSTNKRGYKMLPHFQIGLWGTHAFIYFGLIYECPQKVETAHAFLEHLNDLKTNIPNDFVWSIDHTKPSVKLHKTLETEDLQKMIERLATVKKAELLVGIHISPEEFSAMTNEQFLAKIESTMQPLLPLYALCNR.

Belongs to the UPF0637 family.

The sequence is that of UPF0637 protein BCG9842_B1177 from Bacillus cereus (strain G9842).